Reading from the N-terminus, the 98-residue chain is Serine rich endogenous peptide 10 (98 aa).

Residues 1 to 29 (MERKKFSSKFIHLLIVFLLLCTFLSRTES) form the signal peptide. Residues 50 to 98 (NSAIGTPSSTSDHAPGSNGRKLMSIYRPNGDIFTGPSGSGHGGGRTPAP) are disordered. Residues 52–61 (AIGTPSSTSD) are compositionally biased toward polar residues. 2 consecutive short sequence motifs (SCOOP motif) follow at residues 52-66 (AIGTPSSTSDHAPGS) and 80-94 (DIFTGPSGSGHGGGR). 2 consecutive short sequence motifs (sxS motif essential for MIK2 binding) follow at residues 58–60 (STS) and 86–88 (SGS). Positions 86 to 98 (SGSGHGGGRTPAP) are enriched in gly residues.

Belongs to the serine rich endogenous peptide (SCOOP) phytocytokine family. Interacts with MIK2 (via extracellular leucine-rich repeat domain); this interaction triggers the formation of complex between MIK2 and the BAK1/SERK3 and SERK4 coreceptors, and subsequent BAK1 activation by phosphorylation. In terms of tissue distribution, mostly expressed in leaves and seedlings shoots, to a lower extent, in roots, but barely in flowers.

Its subcellular location is the cell membrane. It localises to the secreted. The protein resides in the extracellular space. It is found in the apoplast. Brassicaceae-specific phytocytokine (plant endogenous peptide released into the apoplast) perceived by MIK2 in a BAK1/SERK3 and SERK4 coreceptors-dependent manner, that modulates various physiological and antimicrobial processes including growth prevention and reactive oxygen species (ROS) response regulation. Inhibits root growth and regulates root meristems. Promotes ROS production and MAPK (e.g. MPK3, MPK4 and MPK6) activation in a MIK2-dependent manner, thus leading to the up-regulation of immune-related marker genes (e.g. WRKY30, WRKY33 and CYP81F2). This chain is Serine rich endogenous peptide 10, found in Arabidopsis thaliana (Mouse-ear cress).